The following is a 951-amino-acid chain: Glycine dehydrogenase (decarboxylating) 1 (951 aa).

Lys-703 is subject to N6-(pyridoxal phosphate)lysine.

It belongs to the GcvP family. As to quaternary structure, the glycine cleavage system is composed of four proteins: P, T, L and H. Pyridoxal 5'-phosphate serves as cofactor.

It carries out the reaction N(6)-[(R)-lipoyl]-L-lysyl-[glycine-cleavage complex H protein] + glycine + H(+) = N(6)-[(R)-S(8)-aminomethyldihydrolipoyl]-L-lysyl-[glycine-cleavage complex H protein] + CO2. The glycine cleavage system catalyzes the degradation of glycine. The P protein binds the alpha-amino group of glycine through its pyridoxal phosphate cofactor; CO(2) is released and the remaining methylamine moiety is then transferred to the lipoamide cofactor of the H protein. The chain is Glycine dehydrogenase (decarboxylating) 1 (gcvP1) from Pseudomonas putida (strain ATCC 47054 / DSM 6125 / CFBP 8728 / NCIMB 11950 / KT2440).